A 545-amino-acid chain; its full sequence is Chaperonin GroEL (545 aa).

ATP is bound by residues 29–32 (TLGP), lysine 50, 86–90 (DGTTT), glycine 415, and aspartate 495.

Belongs to the chaperonin (HSP60) family. Forms a cylinder of 14 subunits composed of two heptameric rings stacked back-to-back. Interacts with the co-chaperonin GroES.

The protein resides in the cytoplasm. The catalysed reaction is ATP + H2O + a folded polypeptide = ADP + phosphate + an unfolded polypeptide.. In terms of biological role, together with its co-chaperonin GroES, plays an essential role in assisting protein folding. The GroEL-GroES system forms a nano-cage that allows encapsulation of the non-native substrate proteins and provides a physical environment optimized to promote and accelerate protein folding. The chain is Chaperonin GroEL from Bacteroides fragilis (strain ATCC 25285 / DSM 2151 / CCUG 4856 / JCM 11019 / LMG 10263 / NCTC 9343 / Onslow / VPI 2553 / EN-2).